Here is a 258-residue protein sequence, read N- to C-terminus: MEVIAKKRFGQNFLINKAIQKAIVDVACVDDENVIEIGPGLGALTDLIKELSKELIAYEIDNDLFKKLLVENQNSNVRFINEDFLNATFDEKKEWVVIGNIPYNITSEILFKLIENHSILKKATLMVQDEVANRLVAMPKTKEYSKLTVSVNFVGNVKKHFVVKASNFNPAPKVDSAIITIDFYKSLPYNLKKVLAFIKQIFAFKRKMLINNLVPQWPKADVIWAIEQIGHKQTTRAEELSLQEIMKLYEILVNSKSN.

Positions 12, 14, 38, 59, 83, and 100 each coordinate S-adenosyl-L-methionine.

It belongs to the class I-like SAM-binding methyltransferase superfamily. rRNA adenine N(6)-methyltransferase family. RsmA subfamily.

Its subcellular location is the cytoplasm. The enzyme catalyses adenosine(1518)/adenosine(1519) in 16S rRNA + 4 S-adenosyl-L-methionine = N(6)-dimethyladenosine(1518)/N(6)-dimethyladenosine(1519) in 16S rRNA + 4 S-adenosyl-L-homocysteine + 4 H(+). In terms of biological role, specifically dimethylates two adjacent adenosines (A1518 and A1519) in the loop of a conserved hairpin near the 3'-end of 16S rRNA in the 30S particle. May play a critical role in biogenesis of 30S subunits. In Metamycoplasma arthritidis (strain 158L3-1) (Mycoplasma arthritidis), this protein is Ribosomal RNA small subunit methyltransferase A.